A 1084-amino-acid chain; its full sequence is Histone deacetylase 4 (1084 aa).

The stretch at 67–177 forms a coiled coil; sequence REQQLQQELL…STEVKMKLQE (111 aa). The segment at 118-313 is interaction with MEF2A; that stretch reads MLAMKHQQEL…NNSSGSVSAE (196 aa). Residues 133–163 are compositionally biased toward basic and acidic residues; that stretch reads KLERHRQEQELEKQHREQKLQQLKNKEKGKE. Disordered stretches follow at residues 133–166, 206–226, and 240–315; these read KLER…ESAV, TQHS…TSYN, and PLRK…AENG. The residue at position 210 (serine 210) is a Phosphoserine. The residue at position 246 (serine 246) is a Phosphoserine; by CaMK4 and SIK1. Residues 259-274 show a composition bias toward basic and acidic residues; that stretch reads KVAERRSSPLLRRKDG. Low complexity predominate over residues 290-312; the sequence is SACSSAPGSGPSSPNNSSGSVSA. Positions 349–354 match the PxLPxI/L motif; mediates interaction with ANKRA2 and 14-3-3 proteins motif; the sequence is PSLPNI. Phosphoserine is present on serine 350. Serine 467 carries the post-translational modification Phosphoserine; by CaMK4 and SIK1. 3 disordered regions span residues 509–531, 548–585, and 626–646; these read PKPS…ELRE, KEAH…QPSE, and PLSR…VQEP. The span at 516–531 shows a compositional bias: basic and acidic residues; sequence RQPESHPEETEEELRE. A Glycyl lysine isopeptide (Lys-Gly) (interchain with G-Cter in SUMO) cross-link involves residue lysine 559. Serine 565 carries the phosphoserine modification. Positions 629 to 641 are enriched in polar residues; sequence RAQSSPASATFPV. Residue serine 632 is modified to Phosphoserine; by CaMK4. The residue at position 633 (serine 633) is a Phosphoserine. A histone deacetylase region spans residues 655-1084; that stretch reads GLVYDTLMLK…EEPMEEEPPL (430 aa). Cysteine 667, cysteine 669, histidine 675, and cysteine 751 together coordinate Zn(2+). Histidine 803 is an active-site residue. The Nuclear export signal signature appears at 1051 to 1084; sequence EEAETVTAMASLSVGVKPAEKRPDEEPMEEEPPL. The tract at residues 1061 to 1084 is disordered; that stretch reads SLSVGVKPAEKRPDEEPMEEEPPL.

This sequence belongs to the histone deacetylase family. HD type 2 subfamily. In terms of assembly, homodimer. Homodimerization via its N-terminal domain. Interacts with MEF2A. Interacts with MEF2C and MEF2D. Interacts with AHRR. Interacts with NR2C1. Interacts with HDAC7. Interacts with a 14-3-3 chaperone proteins in a phosphorylation dependent manner. Interacts with 14-3-3 protein YWHAB. Interacts with BTBD14B. Interacts with KDM5B. Interacts with MYOCD. Interacts with MORC2. Interacts (via PxLPxI/L motif) with ANKRA2 (via ankyrin repeats). Interacts with CUL7 (as part of the 3M complex); negatively regulated by ANKRA2. Interacts with EP300 in the presence of TFAP2C. Interacts with HSPA1A and HSPA1B leading to their deacetylation at 'Lys-77'. Interacts with ZBTB7B; the interaction allows the recruitment of HDAC4 on CD8 loci for deacetylation and possible inhibition of CD8 genes expression. Interacts with DHX36. Interacts with SIK3; this interaction leads to HDAC4 retention in the cytoplasm. Interacts with ZNF638. Phosphorylated by CaMK4 at Ser-246, Ser-467 and Ser-632. Phosphorylation at other residues by CaMK2D is required for the interaction with 14-3-3. Phosphorylation at Ser-350, within the PxLPxI/L motif, impairs the binding of ANKRA2 but generates a high-affinity docking site for 14-3-3. In terms of processing, sumoylation on Lys-559 is promoted by the E3 SUMO-protein ligase RANBP2, and prevented by phosphorylation by CaMK4. As to expression, ubiquitous.

The protein resides in the nucleus. Its subcellular location is the cytoplasm. It carries out the reaction N(6)-acetyl-L-lysyl-[histone] + H2O = L-lysyl-[histone] + acetate. In terms of biological role, responsible for the deacetylation of lysine residues on the N-terminal part of the core histones (H2A, H2B, H3 and H4). Histone deacetylation gives a tag for epigenetic repression and plays an important role in transcriptional regulation, cell cycle progression and developmental events. Histone deacetylases act via the formation of large multiprotein complexes. Involved in muscle maturation via its interaction with the myocyte enhancer factors such as MEF2A, MEF2C and MEF2D. Involved in the MTA1-mediated epigenetic regulation of ESR1 expression in breast cancer. Deacetylates HSPA1A and HSPA1B at 'Lys-77' leading to their preferential binding to co-chaperone STUB1. The polypeptide is Histone deacetylase 4 (Homo sapiens (Human)).